A 219-amino-acid polypeptide reads, in one-letter code: Proline-rich protein 27 (219 aa).

A signal peptide spans 1-15 (MKLLLWACIVCVAFA). The span at 155–204 (AAEPAAEAPVGAEPAAEAPVAAEPAAEAPVGVEPAAEEPSPAEPATAKPA) shows a compositional bias: low complexity. A disordered region spans residues 155-219 (AAEPAAEAPV…PSPSLEQANQ (65 aa)).

The protein resides in the secreted. This Homo sapiens (Human) protein is Proline-rich protein 27 (PRR27).